The following is a 187-amino-acid chain: Protein GrpE (187 aa).

The interval 1-23 is disordered; the sequence is MNNEKELKKEETSVENKEKKVAT.

Belongs to the GrpE family. As to quaternary structure, homodimer.

Its subcellular location is the cytoplasm. Its function is as follows. Participates actively in the response to hyperosmotic and heat shock by preventing the aggregation of stress-denatured proteins, in association with DnaK and GrpE. It is the nucleotide exchange factor for DnaK and may function as a thermosensor. Unfolded proteins bind initially to DnaJ; upon interaction with the DnaJ-bound protein, DnaK hydrolyzes its bound ATP, resulting in the formation of a stable complex. GrpE releases ADP from DnaK; ATP binding to DnaK triggers the release of the substrate protein, thus completing the reaction cycle. Several rounds of ATP-dependent interactions between DnaJ, DnaK and GrpE are required for fully efficient folding. The polypeptide is Protein GrpE (Mesoplasma florum (strain ATCC 33453 / NBRC 100688 / NCTC 11704 / L1) (Acholeplasma florum)).